We begin with the raw amino-acid sequence, 541 residues long: Tegument protein UL21 homolog (541 aa).

The protein belongs to the alphaherpesvirinae UL21 protein family. Interacts (via C-terminus) with UL16.

Its subcellular location is the virion tegument. The protein localises to the host cytoplasm. The protein resides in the host nucleus. Functionally, may participate in DNA packaging/capsid maturation events. Promotes efficient incorporation of tegument proteins UL46, UL49, and US3 homologs into virions. May also play a role in capsid transport to the trans-Golgi network (TGN). This Varicella-zoster virus (strain Oka vaccine) (HHV-3) protein is Tegument protein UL21 homolog.